A 1326-amino-acid chain; its full sequence is Paired amphipathic helix protein Sin3-like 4 (1326 aa).

3 PAH domains span residues 8 to 78 (QKLT…LPKG), 95 to 165 (KPVE…LPDT), and 292 to 367 (IPSS…LAQC). Disordered regions lie at residues 272 to 299 (DDDS…STYD), 715 to 812 (VPSR…RAET), 844 to 864 (SVAG…TEEL), and 927 to 1000 (SKSK…EGDM). The span at 721 to 737 (GAEDREDAVKSTNHDRE) shows a compositional bias: basic and acidic residues. Polar residues-rich tracts occupy residues 744–757 (SPQN…SMRS), 781–805 (SSKT…NLTT), 844–861 (SVAG…TSGT), and 942–961 (PRSS…SGTD). The segment covering 967-981 (DCYREDDIDHNKVES) has biased composition (basic and acidic residues).

It is found in the nucleus. Its function is as follows. Acts as a transcriptional repressor. Plays roles in regulating gene expression and genome stability. This chain is Paired amphipathic helix protein Sin3-like 4 (SNL4), found in Arabidopsis thaliana (Mouse-ear cress).